Reading from the N-terminus, the 582-residue chain is MAKKKKSNATNAARLLESSISPIVEIKYPEPLFTIAAHPTKPILLSGLATGHIYCSTYDADILEEAQSTKREKLSLLEKEAFKTGKIAHINRSVSQSKQKWWTVIEDNADIPDGSNIVNNWKTKRHKGSCRSAIFDPLENSLGENIYSVGTDHIIKKANTETGKVLSKATISEHYSDKNDAITKLVHSTSHPFLLSGTENGDVLVYDSNNMASNQLKFNVSKAHDDSINHILPMPAVSAYHYLTLGSTTLSHIDIRKGIITQSDDQEDELLSMCFASDHVNDNKNDTVLVSHGEGIVTIWKNSKNRLMDQLSRIKVNKEASIDAIIPTMNCDDGEMVDSVWCGDSEGLLHRINYKKGKVVETRVHSSAAGKHGPADEVGILDIDYDYRLISAGMDSLKIWSNQEETLNSDSDDSDSDDSDSDIGSNDSEDSDSDDDDVAINNKIEDEVNDFSPDSDSETGNDDSDENLEDVADSDSNEDQIENVTDEEHQLSDTELPTKSLQIIRKKRFNVPEISNKTNINKKVVDINKLTKEQSTKKADEEPEETEEPDKKKQKLKAKQMSTKQIRNMQKHEHGIRRFDDL.

WD repeat units follow at residues Lys27–Ser68, Arg125–Lys168, Asp177–Leu216, Asp265–Gln310, and Gly373–Asp410. Disordered regions lie at residues Glu405–Leu496 and Thr531–Leu582. Composition is skewed to acidic residues over residues Asp410–Val438 and Glu447–Thr485. 2 stretches are compositionally biased toward basic and acidic residues: residues Thr531–Asp540 and Gln570–Leu582.

Belongs to the WD repeat WDR55 family.

The protein localises to the nucleus. It localises to the nucleolus. The sequence is that of WD repeat-containing protein JIP5 (JIP5) from Debaryomyces hansenii (strain ATCC 36239 / CBS 767 / BCRC 21394 / JCM 1990 / NBRC 0083 / IGC 2968) (Yeast).